Reading from the N-terminus, the 157-residue chain is Baculoviral IAP repeat-containing protein 5.2-B (157 aa).

A BIR repeat occupies 31–101; that stretch reads RLRTFSNWPF…KHSPSCLFIA (71 aa). The residue at position 47 (T47) is a Phosphothreonine; by CDK1. 4 residues coordinate Zn(2+): C70, C73, H90, and C97.

Belongs to the IAP family. In terms of assembly, component of the CPC at least composed of survivin/birc5, incenp, cdca8/borealin and/or cdca9/dasra-A, and aurkb/aurora-B. Interacts directly with incenp (via N-terminus). Interacts with rxra; the interaction is stronger in the absence of 9-cis retinoic acids. Post-translationally, ubiquitination is required for centrosome-targeting. In terms of tissue distribution, exhibits strong and homogeneous expression in developing oocytes. In embryos, expressed in the animal hemisphere from one-cell to yolk plug stages, and highly expressed in the future brain and dorsal region of the neural tube at the neurula stage and early tail-bud stage. At tadpole stages, expression is restricted at a low level to the head region.

The protein resides in the cytoplasm. It is found in the nucleus. The protein localises to the chromosome. It localises to the centromere. Its subcellular location is the cytoskeleton. The protein resides in the spindle. Functionally, does not appear to exhibit anti-apoptotic activity. Plays a role in increasing blood vessel size during development. Component of the chromosomal passenger complex (CPC), a complex that acts as a key regulator of mitosis. The CPC complex has essential functions at the centromere in ensuring correct chromosome alignment and segregation and is required for chromatin-induced microtubule stabilization and spindle assembly. In Xenopus laevis (African clawed frog), this protein is Baculoviral IAP repeat-containing protein 5.2-B (birc5.2-b).